Here is a 453-residue protein sequence, read N- to C-terminus: Chromosomal replication initiator protein DnaA (453 aa).

A domain I, interacts with DnaA modulators region spans residues 1-71; that stretch reads MSEKEIWEKV…QAILFDVVGY (71 aa). The segment at 71–114 is domain II; it reads YEVKPHFITTEELANYSNNETATPKETTKPSTETTEDNHVLGRE. The interval 115–331 is domain III, AAA+ region; sequence QFNAHNTFDT…GALTRLLAYS (217 aa). ATP is bound by residues glycine 159, glycine 161, lysine 162, and threonine 163. The segment at 332–453 is domain IV, binds dsDNA; it reads QLLGKPITTE…ENLEKEIRNV (122 aa).

It belongs to the DnaA family. As to quaternary structure, oligomerizes as a right-handed, spiral filament on DNA at oriC.

Its subcellular location is the cytoplasm. Functionally, plays an essential role in the initiation and regulation of chromosomal replication. ATP-DnaA binds to the origin of replication (oriC) to initiate formation of the DNA replication initiation complex once per cell cycle. Binds the DnaA box (a 9 base pair repeat at the origin) and separates the double-stranded (ds)DNA. Forms a right-handed helical filament on oriC DNA; dsDNA binds to the exterior of the filament while single-stranded (ss)DNA is stabiized in the filament's interior. The ATP-DnaA-oriC complex binds and stabilizes one strand of the AT-rich DNA unwinding element (DUE), permitting loading of DNA polymerase. After initiation quickly degrades to an ADP-DnaA complex that is not apt for DNA replication. Binds acidic phospholipids. The chain is Chromosomal replication initiator protein DnaA from Staphylococcus aureus (strain Mu3 / ATCC 700698).